Reading from the N-terminus, the 91-residue chain is Potassium channel toxin Meg-beta-KTx1 (91 aa).

An N-terminal signal peptide occupies residues 1–19 (MQRNLVVLLFLGMVALSSC). Residues 20–27 (GLREKHFQ) constitute a propeptide that is removed on maturation. The BetaSPN-type CS-alpha/beta domain maps to 54–91 (QFGCPAYQGYCDDHCQDIKKQEGFCHGFKCKCGIPMGF). 3 cysteine pairs are disulfide-bonded: Cys-57-Cys-78, Cys-64-Cys-83, and Cys-68-Cys-85.

Belongs to the long chain scorpion toxin family. Class 1 subfamily. In terms of tissue distribution, expressed by the venom gland.

It is found in the secreted. Inhibits voltage-gated potassium channel. The protein is Potassium channel toxin Meg-beta-KTx1 of Mesobuthus gibbosus (Mediterranean checkered scorpion).